We begin with the raw amino-acid sequence, 248 residues long: tRNA (guanine-N(7)-)-methyltransferase (248 aa).

S-adenosyl-L-methionine contacts are provided by glutamate 80, glutamate 105, aspartate 132, and aspartate 155. Aspartate 155 is an active-site residue. Substrate contacts are provided by residues lysine 159, aspartate 191, and 223–226 (TKFE).

Belongs to the class I-like SAM-binding methyltransferase superfamily. TrmB family.

It catalyses the reaction guanosine(46) in tRNA + S-adenosyl-L-methionine = N(7)-methylguanosine(46) in tRNA + S-adenosyl-L-homocysteine. Its pathway is tRNA modification; N(7)-methylguanine-tRNA biosynthesis. Functionally, catalyzes the formation of N(7)-methylguanine at position 46 (m7G46) in tRNA. In Nocardioides sp. (strain ATCC BAA-499 / JS614), this protein is tRNA (guanine-N(7)-)-methyltransferase.